Consider the following 425-residue polypeptide: RNA-binding protein L (425 aa).

A compositionally biased stretch (pro residues) spans 1–20 (MQQPPSQPQPGMGGPPPPPQ). The interval 1 to 82 (MQQPPSQPQP…AAPPPQAMPA (82 aa)) is disordered. Residues 21–31 (GAAGQPPQWGA) are compositionally biased toward low complexity. The segment covering 32 to 80 (IPPPMPPHQYGAPPPQQPPAMWGQPPPQAHYGQVPPPQPYYAAPPPQAM) has biased composition (pro residues). 3 consecutive RRM domains span residues 90–170 (KTLW…WASA), 180–259 (YTIF…PAAN), and 284–356 (TTIF…WGRS).

It belongs to the polyadenylate-binding RBP45 family. Interacts with RBP-P. Interacts with RAB5A.

Its subcellular location is the nucleus. It localises to the cytoplasm. Its function is as follows. RNA-binding protein that binds to a cis-localization element or zipcode, within the 5'-CDS of prolamine RNA. Binds strongly to glutelin and prolamin mRNAs, particularly to 3'-UTR and zipcode RNA. Recognizes and binds to glutelin zipcode RNA, which is required for proper mRNA localization to cisternal endoplasmic reticulum. Recognizes and binds to prolamin zipcode RNA, which is required for proper mRNA localization to the protein body endoplasmic reticulum that delimits the prolamine intracisternal inclusion granules. Required for the correct localization of glutelin and prolamine mRNA in endosperm cells during grain development. RBP-L and RBP-P form a quaternary complex with the membrane trafficking factors NSF and RAB5A. This quaternay complex carries glutelin mRNAs for active transport on endosomes to the cortical endoplasmic reticulum membrane, and enables endosome-mediated glutelin mRNA transport in endosperm cells. This is RNA-binding protein L from Oryza sativa subsp. japonica (Rice).